The sequence spans 293 residues: Formamidopyrimidine-DNA glycosylase (293 aa).

Residue Pro2 is the Schiff-base intermediate with DNA of the active site. Glu3 serves as the catalytic Proton donor. Residue Lys58 is the Proton donor; for beta-elimination activity of the active site. 3 residues coordinate DNA: His104, Arg123, and Lys166. An FPG-type zinc finger spans residues 257 to 293 (KVYDREGETCKTPACGGTIKRFTQNGRSTFWCPKCQK). Residue Arg283 is the Proton donor; for delta-elimination activity of the active site.

The protein belongs to the FPG family. As to quaternary structure, monomer. Zn(2+) is required as a cofactor.

It catalyses the reaction Hydrolysis of DNA containing ring-opened 7-methylguanine residues, releasing 2,6-diamino-4-hydroxy-5-(N-methyl)formamidopyrimidine.. The enzyme catalyses 2'-deoxyribonucleotide-(2'-deoxyribose 5'-phosphate)-2'-deoxyribonucleotide-DNA = a 3'-end 2'-deoxyribonucleotide-(2,3-dehydro-2,3-deoxyribose 5'-phosphate)-DNA + a 5'-end 5'-phospho-2'-deoxyribonucleoside-DNA + H(+). Its function is as follows. Involved in base excision repair of DNA damaged by oxidation or by mutagenic agents. Acts as a DNA glycosylase that recognizes and removes damaged bases. Has a preference for oxidized purines, such as 7,8-dihydro-8-oxoguanine (8-oxoG). Has AP (apurinic/apyrimidinic) lyase activity and introduces nicks in the DNA strand. Cleaves the DNA backbone by beta-delta elimination to generate a single-strand break at the site of the removed base with both 3'- and 5'-phosphates. The sequence is that of Formamidopyrimidine-DNA glycosylase from Bradyrhizobium diazoefficiens (strain JCM 10833 / BCRC 13528 / IAM 13628 / NBRC 14792 / USDA 110).